The chain runs to 349 residues: Holliday junction branch migration complex subunit RuvB (349 aa).

Residues 1–15 (MSDDYRETDPTRQPE) are compositionally biased toward basic and acidic residues. Residues 1-25 (MSDDYRETDPTRQPEDMGEGSLRPE) form a disordered region. The interval 1 to 183 (MSDDYRETDP…FGIPLRLVFY (183 aa)) is large ATPase domain (RuvB-L). ATP is bound by residues leucine 22, arginine 23, glycine 64, lysine 67, threonine 68, threonine 69, 130–132 (EDF), arginine 173, tyrosine 183, and arginine 220. Mg(2+) is bound at residue threonine 68. Positions 184–254 (TPEELRAIVS…LADAALGRLE (71 aa)) are small ATPAse domain (RuvB-S). Positions 257–349 (ERGLDAMDRR…SSLEQDDSAP (93 aa)) are head domain (RuvB-H). DNA is bound by residues arginine 293, arginine 312, and arginine 317.

This sequence belongs to the RuvB family. In terms of assembly, homohexamer. Forms an RuvA(8)-RuvB(12)-Holliday junction (HJ) complex. HJ DNA is sandwiched between 2 RuvA tetramers; dsDNA enters through RuvA and exits via RuvB. An RuvB hexamer assembles on each DNA strand where it exits the tetramer. Each RuvB hexamer is contacted by two RuvA subunits (via domain III) on 2 adjacent RuvB subunits; this complex drives branch migration. In the full resolvosome a probable DNA-RuvA(4)-RuvB(12)-RuvC(2) complex forms which resolves the HJ.

Its subcellular location is the cytoplasm. It carries out the reaction ATP + H2O = ADP + phosphate + H(+). Its function is as follows. The RuvA-RuvB-RuvC complex processes Holliday junction (HJ) DNA during genetic recombination and DNA repair, while the RuvA-RuvB complex plays an important role in the rescue of blocked DNA replication forks via replication fork reversal (RFR). RuvA specifically binds to HJ cruciform DNA, conferring on it an open structure. The RuvB hexamer acts as an ATP-dependent pump, pulling dsDNA into and through the RuvAB complex. RuvB forms 2 homohexamers on either side of HJ DNA bound by 1 or 2 RuvA tetramers; 4 subunits per hexamer contact DNA at a time. Coordinated motions by a converter formed by DNA-disengaged RuvB subunits stimulates ATP hydrolysis and nucleotide exchange. Immobilization of the converter enables RuvB to convert the ATP-contained energy into a lever motion, pulling 2 nucleotides of DNA out of the RuvA tetramer per ATP hydrolyzed, thus driving DNA branch migration. The RuvB motors rotate together with the DNA substrate, which together with the progressing nucleotide cycle form the mechanistic basis for DNA recombination by continuous HJ branch migration. Branch migration allows RuvC to scan DNA until it finds its consensus sequence, where it cleaves and resolves cruciform DNA. This Gluconobacter oxydans (strain 621H) (Gluconobacter suboxydans) protein is Holliday junction branch migration complex subunit RuvB.